The primary structure comprises 853 residues: Translation initiation factor IF-2 (853 aa).

Disordered regions lie at residues 1-68 (MSDT…ASDG) and 94-265 (LEQR…DKTS). The segment covering 20 to 32 (RKTSGTVKQSFSH) has biased composition (polar residues). The span at 94–161 (LEQRKAEEAS…ASREAVERPS (68 aa)) shows a compositional bias: basic and acidic residues. The segment covering 163-176 (APRAAPAAQTPPAA) has biased composition (low complexity). 2 stretches are compositionally biased toward basic and acidic residues: residues 196-219 (PARD…DAER) and 245-265 (RARE…DKTS). Positions 347–515 (PRAPIVTIMG…AISIQAEILE (169 aa)) constitute a tr-type G domain. Residues 356 to 363 (GHVDHGKT) are G1. 356–363 (GHVDHGKT) is a binding site for GTP. Positions 381–385 (GITQH) are G2. The tract at residues 403–406 (DTPG) is G3. Residues 403-407 (DTPGH) and 457-460 (TKSD) each bind GTP. Residues 457-460 (TKSD) are G4. Residues 493–495 (SAK) are G5.

Belongs to the TRAFAC class translation factor GTPase superfamily. Classic translation factor GTPase family. IF-2 subfamily.

It localises to the cytoplasm. Functionally, one of the essential components for the initiation of protein synthesis. Protects formylmethionyl-tRNA from spontaneous hydrolysis and promotes its binding to the 30S ribosomal subunits. Also involved in the hydrolysis of GTP during the formation of the 70S ribosomal complex. This Hyphomonas neptunium (strain ATCC 15444) protein is Translation initiation factor IF-2.